The chain runs to 233 residues: Large ribosomal subunit protein uL1 (233 aa).

The protein belongs to the universal ribosomal protein uL1 family. Part of the 50S ribosomal subunit.

Functionally, binds directly to 23S rRNA. The L1 stalk is quite mobile in the ribosome, and is involved in E site tRNA release. Protein L1 is also a translational repressor protein, it controls the translation of the L11 operon by binding to its mRNA. The protein is Large ribosomal subunit protein uL1 of Geotalea daltonii (strain DSM 22248 / JCM 15807 / FRC-32) (Geobacter daltonii).